Here is a 326-residue protein sequence, read N- to C-terminus: Mitochondrial glycine transporter (326 aa).

Solcar repeat units follow at residues 45-134 (HPVI…SKQY), 141-225 (PTAL…TRAT), and 237-321 (LMPL…MMAK). A run of 6 helical transmembrane segments spans residues 51 to 76 (FLCG…TRLQ), 109 to 135 (GMSP…KQYF), 147 to 172 (VILG…TRYE), 200 to 223 (GLTA…SQTR), 241 to 267 (VNFS…KTHM), and 296 to 314 (GSVP…AWTV).

The protein belongs to the mitochondrial carrier (TC 2.A.29) family. SLC25A38 subfamily.

It localises to the mitochondrion inner membrane. The catalysed reaction is glycine(in) = glycine(out). In terms of biological role, mitochondrial glycine transporter that imports glycine into the mitochondrial matrix. Plays an important role in providing glycine for the first enzymatic step in heme biosynthesis, the condensation of glycine with succinyl-CoA to produce 5-aminolevulinate (ALA) in the mitochondrial matrix. Required during erythropoiesis. Its function is as follows. Plays a role as pro-apoptotic protein that induces caspase-dependent apoptosis. In Rattus norvegicus (Rat), this protein is Mitochondrial glycine transporter.